The following is a 634-amino-acid chain: Growth hormone receptor (634 aa).

The N-terminal stretch at 1 to 18 (MDLWQLLLTLAVAGSSDA) is a signal peptide. Topologically, residues 19 to 260 (FSGSEATPAF…NPSACEEDFQ (242 aa)) are extracellular. Asn46 carries N-linked (GlcNAc...) asparagine glycosylation. Cys56 and Cys66 are disulfide-bonded. Asn73 carries an N-linked (GlcNAc...) asparagine glycan. An intrachain disulfide couples Cys97 to Cys108. Asn111 carries an N-linked (GlcNAc...) asparagine glycan. An intrachain disulfide couples Cys122 to Cys136. One can recognise a Fibronectin type-III domain in the interval 147-250 (PPVGLNWTLL…EVLLITFPQM (104 aa)). N-linked (GlcNAc...) asparagine glycosylation is found at Asn152, Asn157, and Asn196. Residues 236–240 (YGKFS) carry the WSXWS motif motif. A helical membrane pass occupies residues 261–284 (FPWFLIIIFGILGLAVTLYLLIFS). Over 285–634 (KQQRIKMLIL…STDQLNKIMP (350 aa)) the chain is Cytoplasmic. A required for JAK2 binding region spans residues 290–375 (KMLILPPVPV…HEKSLNIFGA (86 aa)). Positions 293–301 (ILPPVPVPK) match the Box 1 motif motif. The short motif at 336-345 (DSWVEFIELD) is the UbE motif element. Ser337 carries the phosphoserine modification.

Belongs to the type I cytokine receptor family. Type 1 subfamily. On growth hormone (GH) binding, forms homodimers and binds JAK2 via a box 1-containing domain. In terms of processing, the soluble form (GHBP) is produced by phorbol ester-promoted proteolytic cleavage at the cell surface (shedding) by ADAM17/TACE. Shedding is inhibited by growth hormone (GH) binding to the receptor probably due to a conformational change in GHR rendering the receptor inaccessible to ADAM17. Post-translationally, on GH binding, phosphorylated on tyrosine residues in the cytoplasmic domain by JAK2. Ubiquitinated by the ECS(SOCS2) complex following ligand-binding and phosphorylation by JAK2, leading to its degradation by the proteasome. Regulation by the ECS(SOCS2) complex acts as a negative feedback loop of growth hormone receptor signaling. Ubiquitination is not sufficient for GHR internalization.

It localises to the cell membrane. Its subcellular location is the secreted. Its function is as follows. Receptor for pituitary gland growth hormone (GH1) involved in regulating postnatal body growth. On ligand binding, couples to the JAK2/STAT5 pathway. In terms of biological role, the soluble form (GHBP) acts as a reservoir of growth hormone in plasma and may be a modulator/inhibitor of GH signaling. This Bos taurus (Bovine) protein is Growth hormone receptor (GHR).